We begin with the raw amino-acid sequence, 233 residues long: Large ribosomal subunit protein uL1 (233 aa).

It belongs to the universal ribosomal protein uL1 family. Part of the 50S ribosomal subunit.

Binds directly to 23S rRNA. The L1 stalk is quite mobile in the ribosome, and is involved in E site tRNA release. Functionally, protein L1 is also a translational repressor protein, it controls the translation of the L11 operon by binding to its mRNA. This chain is Large ribosomal subunit protein uL1, found in Finegoldia magna (strain ATCC 29328 / DSM 20472 / WAL 2508) (Peptostreptococcus magnus).